An 88-amino-acid chain; its full sequence is MGFTDETVRFNLDDSNKKEISETLTDVYKSLNEKGYNPINQIVGYVLSGDPAYVPRYNNARNQIRKYERDEIVEELVRYYLKGQGVDL.

Belongs to the UPF0297 family.

This Streptococcus sanguinis (strain SK36) protein is UPF0297 protein SSA_2241.